The following is a 236-amino-acid chain: Growth-regulating factor 12 (236 aa).

Positions 1–27 are disordered; sequence MLAEGRQVYLPPPPPSKLPRLSGTDPT. Residues 74–109 form the QLQ domain; sequence ALTFMQRQELEQQVLIYRYFAAGAPVPVHLVLPIWK. The WRC domain maps to 140-184; that stretch reads EPEPGRCRRTDGKKWRCSRDVVPGHKYCERHVHRGRGRSRKPMEA. 2 consecutive short sequence motifs (bipartite nuclear localization signal) follow at residues 145–155 and 173–180; these read RCRRTDGKKWR and RGRGRSRK.

The protein belongs to the GRF family.

The protein resides in the nucleus. Its function is as follows. Transcription activator that plays a regulatory role in gibberellin-induced stem elongation. The sequence is that of Growth-regulating factor 12 (GRF12) from Oryza sativa subsp. japonica (Rice).